A 151-amino-acid chain; its full sequence is Transcriptional regulator MraZ (151 aa).

2 consecutive SpoVT-AbrB domains span residues 5–52 (ANAI…PLDE) and 81–124 (AVDL…DEDA).

It belongs to the MraZ family. In terms of assembly, forms oligomers.

It localises to the cytoplasm. The protein localises to the nucleoid. This is Transcriptional regulator MraZ from Pseudomonas fluorescens (strain SBW25).